Reading from the N-terminus, the 157-residue chain is MKFSIAAAVVAFAASVAALPPAHDSQFAGNGVGNKGNSNVKFPVPENVTVKQASDKCGDQAQLSCCNKATYAGDTTTVDEGLLSGALSGLIGAGSGAEGLGLFDQCSKLDVAVLIGIQDLVNQKCKQNIACCQNSPSSADGNLIGVGLPCVALGSIL.

Positions 1 to 41 (MKFSIAAAVVAFAASVAALPPAHDSQFAGNGVGNKGNSNVK) are cleaved as a signal peptide. The N-linked (GlcNAc...) asparagine glycan is linked to asparagine 47. 4 disulfides stabilise this stretch: cysteine 57–cysteine 131, cysteine 65–cysteine 125, cysteine 66–cysteine 106, and cysteine 132–cysteine 150.

Belongs to the fungal hydrophobin family. In terms of assembly, self-assembles to form functional amyloid fibrils called rodlets. Self-assembly into fibrillar rodlets occurs spontaneously at hydrophobic:hydrophilic interfaces and the rodlets further associate laterally to form amphipathic monolayers.

Its subcellular location is the secreted. The protein resides in the spore wall. Aerial growth, conidiation, and dispersal of filamentous fungi in the environment rely upon a capability of their secreting small amphipathic proteins called hydrophobins (HPBs) with low sequence identity. Class I can self-assemble into an outermost layer of rodlet bundles on aerial cell surfaces, conferring cellular hydrophobicity that supports fungal growth, development and dispersal; whereas Class II form highly ordered films at water-air interfaces through intermolecular interactions but contribute nothing to the rodlet structure. RodA is a class I hydrophobin that contributes to surface hydrophobicity, which is important for processes such as association of hyphae in reproductive structures, dispersal of aerial spores and adhesion of pathogens to host structures. Important for the formation of hydrophobic rodlet layers of asexually-produced spores. Promotes also biofilm formation and may enhance lignocellulose utilization via promoting a compact substrate-enzyme-fungus structure. In Emericella nidulans (strain FGSC A4 / ATCC 38163 / CBS 112.46 / NRRL 194 / M139) (Aspergillus nidulans), this protein is Class I hydrophobin rodA.